The sequence spans 397 residues: Acetate kinase (397 aa).

Mg(2+) is bound at residue Asn7. Lys14 provides a ligand contact to ATP. Arg91 contacts substrate. Asp148 (proton donor/acceptor) is an active-site residue. ATP is bound by residues 208–212 (HLGNG), 283–285 (DLR), and 331–335 (GVGEN). Glu384 contributes to the Mg(2+) binding site.

This sequence belongs to the acetokinase family. In terms of assembly, homodimer. It depends on Mg(2+) as a cofactor. Mn(2+) serves as cofactor.

The protein resides in the cytoplasm. The catalysed reaction is acetate + ATP = acetyl phosphate + ADP. The protein operates within metabolic intermediate biosynthesis; acetyl-CoA biosynthesis; acetyl-CoA from acetate: step 1/2. Its function is as follows. Catalyzes the formation of acetyl phosphate from acetate and ATP. Can also catalyze the reverse reaction. The sequence is that of Acetate kinase from Syntrophomonas wolfei subsp. wolfei (strain DSM 2245B / Goettingen).